The sequence spans 73 residues: Translation initiation factor IF-1 (73 aa).

An S1-like domain is found at 1-73; the sequence is MAKKDGVIEI…TRGRIVYRYK (73 aa).

The protein belongs to the IF-1 family. As to quaternary structure, component of the 30S ribosomal translation pre-initiation complex which assembles on the 30S ribosome in the order IF-2 and IF-3, IF-1 and N-formylmethionyl-tRNA(fMet); mRNA recruitment can occur at any time during PIC assembly.

The protein localises to the cytoplasm. In terms of biological role, one of the essential components for the initiation of protein synthesis. Stabilizes the binding of IF-2 and IF-3 on the 30S subunit to which N-formylmethionyl-tRNA(fMet) subsequently binds. Helps modulate mRNA selection, yielding the 30S pre-initiation complex (PIC). Upon addition of the 50S ribosomal subunit IF-1, IF-2 and IF-3 are released leaving the mature 70S translation initiation complex. This is Translation initiation factor IF-1 from Arthrobacter sp. (strain FB24).